Here is a 431-residue protein sequence, read N- to C-terminus: MQSLTTALENLLRHLSQEIPATPGIRVIDIPFPLKDAFDALSWLASQQTYPQFYWQQRNGDEEAVVLGAITRFTSLDQAQRFLRQHPEHADLRIWGLNAFDPSQGNLLLPRLEWRRCGGKATLRLTLFSESSLQHDAIQAKEFIATLVSIKPLPGLHLTTTREQHWPDKTGWTQLIELATKTIAEGELDKVVLARATDLHFASPVNAAAMMAASRRLNLNCYHFYMAFDGENAFLGSSPERLWRRRDKALRTEALAGTVANNPDDKQAQQLGEWLMADDKNQRENMLVVEDICQRLQADTQTLDVLPPQVLRLRKVQHLRRCIWTSLNKADDVICLHQLQPTAAVAGLPRDLARQFIARHEPFTREWYAGSAGYLSLQQSEFCVSLRSAKISGNVVRLYAGAGIVRGSDPEQEWQEIDNKAAGLRTLLQME.

Lys190 serves as the catalytic Proton acceptor. Residue Glu240 is the Proton donor of the active site. Mg(2+) is bound by residues Glu284 and Glu416.

This sequence belongs to the isochorismate synthase family. As to quaternary structure, homodimer. The cofactor is Mg(2+).

The catalysed reaction is chorismate = isochorismate. It participates in quinol/quinone metabolism; 1,4-dihydroxy-2-naphthoate biosynthesis; 1,4-dihydroxy-2-naphthoate from chorismate: step 1/7. The protein operates within quinol/quinone metabolism; menaquinone biosynthesis. In terms of biological role, catalyzes the conversion of chorismate to isochorismate. Can also catalyze the reverse reaction, but with a lower efficiency. The polypeptide is Isochorismate synthase MenF (Escherichia coli (strain K12)).